A 718-amino-acid chain; its full sequence is Polyribonucleotide nucleotidyltransferase (718 aa).

Asp496 and Asp502 together coordinate Mg(2+). The region spanning 563–622 (PRLLTIKIDPDMIGLVIGPGGKTIKGITEETGAKIDIEDDGTVTISAVDENKAKRARNIV) is the KH domain. The region spanning 632–700 (GDVYAGRVTR…NKGRINLTRL (69 aa)) is the S1 motif domain.

Belongs to the polyribonucleotide nucleotidyltransferase family. Mg(2+) serves as cofactor.

It localises to the cytoplasm. It carries out the reaction RNA(n+1) + phosphate = RNA(n) + a ribonucleoside 5'-diphosphate. Functionally, involved in mRNA degradation. Catalyzes the phosphorolysis of single-stranded polyribonucleotides processively in the 3'- to 5'-direction. The sequence is that of Polyribonucleotide nucleotidyltransferase from Trichormus variabilis (strain ATCC 29413 / PCC 7937) (Anabaena variabilis).